We begin with the raw amino-acid sequence, 153 residues long: LWWLFRDNLLPSVTKFVGYARTKLTVAELKEKCHPYMKVDAAHEEKYDEFWALNFYVAGSYDGRRDFELLNQEIGKFEVGKTANRLFYLRLPPSVFETVTVHIRNTCMGLKGWNRIIVEKPFGRDADSSNKLSEHLAKLFTEDQLYRIDHYLG.

Positions 21 and 120 each coordinate NADP(+). K120 is a binding site for D-glucose 6-phosphate.

The protein belongs to the glucose-6-phosphate dehydrogenase family.

The protein localises to the cytoplasm. It is found in the cytosol. The enzyme catalyses D-glucose 6-phosphate + NADP(+) = 6-phospho-D-glucono-1,5-lactone + NADPH + H(+). The protein operates within carbohydrate degradation; pentose phosphate pathway; D-ribulose 5-phosphate from D-glucose 6-phosphate (oxidative stage): step 1/3. Cytosolic glucose-6-phosphate dehydrogenase that catalyzes the first and rate-limiting step of the oxidative branch within the pentose phosphate pathway/shunt, an alternative route to glycolysis for the dissimilation of carbohydrates and a major source of reducing power and metabolic intermediates for fatty acid and nucleic acid biosynthetic processes. The sequence is that of Glucose-6-phosphate 1-dehydrogenase (ZW) from Culex pipiens (House mosquito).